The following is a 452-amino-acid chain: Adenylosuccinate synthetase (452 aa).

Residues 40–46 (GDEGKGK) and 68–70 (GHT) contribute to the GTP site. The Proton acceptor role is filled by aspartate 41. Positions 41 and 68 each coordinate Mg(2+). Residues 41–44 (DEGK), 66–69 (NAGH), threonine 158, arginine 172, asparagine 250, threonine 265, and arginine 329 each bind IMP. Histidine 69 functions as the Proton donor in the catalytic mechanism. Position 325–331 (325–331 (VTTKRKR)) interacts with substrate. GTP-binding positions include arginine 331, 357–359 (KLD), and 440–442 (GVG).

The protein belongs to the adenylosuccinate synthetase family. Homodimer. Requires Mg(2+) as cofactor.

Its subcellular location is the cytoplasm. It carries out the reaction IMP + L-aspartate + GTP = N(6)-(1,2-dicarboxyethyl)-AMP + GDP + phosphate + 2 H(+). It participates in purine metabolism; AMP biosynthesis via de novo pathway; AMP from IMP: step 1/2. Its function is as follows. Plays an important role in the de novo pathway and in the salvage pathway of purine nucleotide biosynthesis. Catalyzes the first committed step in the biosynthesis of AMP from IMP. This is Adenylosuccinate synthetase from Drosophila grimshawi (Hawaiian fruit fly).